The following is a 436-amino-acid chain: C4-dicarboxylate transport protein 2 (436 aa).

Transmembrane regions (helical) follow at residues 14–34 (VLVA…TAVA), 45–65 (LIKM…IAGM), 77–97 (MALL…LVVV), 142–162 (VVGA…VLFG), 198–218 (PIGA…GSLV), 223–243 (LMLC…GGIA), 290–310 (VVGL…SIYL), 331–351 (ITLL…TGSG), and 353–373 (IVLA…LALI). The disordered stretch occupies residues 414–436 (ELAGEGNASSPASDIPVGGREAV).

The protein belongs to the dicarboxylate/amino acid:cation symporter (DAACS) (TC 2.A.23) family.

Its subcellular location is the cell inner membrane. In terms of biological role, responsible for the transport of dicarboxylates such as succinate, fumarate, and malate from the periplasm across the membrane. The protein is C4-dicarboxylate transport protein 2 of Pseudomonas aeruginosa (strain UCBPP-PA14).